The chain runs to 439 residues: Protein ABHD8 (439 aa).

2 disordered regions span residues 49-70 and 124-156; these read AGPA…AAQG and PAGS…RPKR. A compositionally biased stretch (gly residues) spans 136-145; sequence AGSGSGSGSG. Residues 146–156 are compositionally biased toward basic residues; sequence GRRRRARRPKR. In terms of domain architecture, AB hydrolase-1 spans 177-279; it reads VLFFIHGVGG…HKVIMINGGG (103 aa). Residues serine 252, aspartate 370, and histidine 398 each act as charge relay system in the active site.

It belongs to the AB hydrolase superfamily. As to quaternary structure, interacts with NLRP3 (via NACHT and LLR domains); this interaction is enhanced in the presence of NLRP3 inflammasome inducers, such as ATP, nigericin, silica, or alum. Interacts with ZDHHC12. (Microbial infection) Interacts with SARS-CoV-2 nucleoprotein N; this interaction disrupts the NLRP3-ABHD8 association, enhancing NLRP3 stability, ultimately leading to increased inflammasome activation.

Its subcellular location is the cytoplasm. Its function is as follows. Negatively regulates NLRP3-driven inflammation. Promotes NLRP3 degradation through the chaperone-mediated autophagy (CMA) pathway, hence attenuating inflammasome activation and IL1B secretion. Acts by recruiting palmitoyltransferase ZDHHC12 to NLRP3, facilitating NLRP3 palmitoylation and subsequent degradation. The sequence is that of Protein ABHD8 from Homo sapiens (Human).